The primary structure comprises 55 residues: Cytochrome b-c1 complex subunit 9 (55 aa).

Over 1-15 (MKVIYNTLFKRTSTY) the chain is Mitochondrial matrix. The chain crosses the membrane as a helical span at residues 16 to 41 (AVAIIASAFFFERALDVTSVAIFEGI). At 42–55 (NKGKLWKDIKGKYE) the chain is on the chloroplast intermembrane side.

It belongs to the UQCR10/QCR9 family. Component of the ubiquinol-cytochrome c oxidoreductase (cytochrome b-c1 complex, complex III, CIII), a multisubunit enzyme composed of 3 respiratory subunits cytochrome b, cytochrome c1 and Rieske protein, 2 core protein subunits, and additional low-molecular weight protein subunits. The complex exists as an obligatory dimer and forms supercomplexes (SCs) in the inner mitochondrial membrane with cytochrome c oxidase (complex IV, CIV).

The protein localises to the mitochondrion inner membrane. Component of the ubiquinol-cytochrome c oxidoreductase, a multisubunit transmembrane complex that is part of the mitochondrial electron transport chain which drives oxidative phosphorylation. The respiratory chain contains 3 multisubunit complexes succinate dehydrogenase (complex II, CII), ubiquinol-cytochrome c oxidoreductase (cytochrome b-c1 complex, complex III, CIII) and cytochrome c oxidase (complex IV, CIV), that cooperate to transfer electrons derived from NADH and succinate to molecular oxygen, creating an electrochemical gradient over the inner membrane that drives transmembrane transport and the ATP synthase. The cytochrome b-c1 complex catalyzes electron transfer from ubiquinol to cytochrome c, linking this redox reaction to translocation of protons across the mitochondrial inner membrane, with protons being carried across the membrane as hydrogens on the quinol. In the process called Q cycle, 2 protons are consumed from the matrix, 4 protons are released into the intermembrane space and 2 electrons are passed to cytochrome c. This is Cytochrome b-c1 complex subunit 9 (ox) from Drosophila melanogaster (Fruit fly).